Consider the following 1414-residue polypeptide: Phenyloxazoline synthase MbtB (1414 aa).

A Carrier 1 domain is found at 5-78 (TACSEIIRAE…AWSQLVSAGT (74 aa)). Position 39 is an O-(pantetheine 4'-phosphoryl)serine (S39). The condensation/cyclization stretch occupies residues 96-394 (EGEPFPLAPM…SSLLLDVDLT (299 aa)). Positions 579–975 (SYAQLRDQAS…RLPGVHAAAA (397 aa)) are adenylation. Residues 1057–1135 (APRTVLQRAL…ALAQLLTGRE (79 aa)) enclose the Carrier 2 domain. O-(pantetheine 4'-phosphoryl)serine is present on S1094. The segment at 1188–1413 (GAVLVFPHAG…AVARMVSADV (226 aa)) is thioesterase.

The protein belongs to the ATP-dependent AMP-binding enzyme family. MbtB subfamily. It depends on pantetheine 4'-phosphate as a cofactor. Post-translationally, 4'-phosphopantetheine is transferred from CoA to a specific serine in each of the two carrier protein domains, leading to their activation from apo to holo forms.

It functions in the pathway siderophore biosynthesis; mycobactin biosynthesis. Involved in the initial steps of the mycobactin biosynthetic pathway. Putatively couples activated salicylic acid with serine or threonine and cyclizes this precursor to the hydroxyphenyloxazoline ring system present in this class of siderophores. The sequence is that of Phenyloxazoline synthase MbtB (mbtB) from Mycobacterium bovis (strain ATCC BAA-935 / AF2122/97).